A 410-amino-acid chain; its full sequence is Peptidase T (410 aa).

The tract at residues 11–30 is disordered; the sequence is RYAEIDTQSDPDSESTPSTE. His-78 serves as a coordination point for Zn(2+). Asp-80 is a catalytic residue. Asp-140 provides a ligand contact to Zn(2+). Glu-174 functions as the Proton acceptor in the catalytic mechanism. Zn(2+) contacts are provided by Glu-175, Asp-197, and His-379.

The protein belongs to the peptidase M20B family. Zn(2+) serves as cofactor.

Its subcellular location is the cytoplasm. It carries out the reaction Release of the N-terminal residue from a tripeptide.. Functionally, cleaves the N-terminal amino acid of tripeptides. The polypeptide is Peptidase T (Staphylococcus carnosus (strain TM300)).